The sequence spans 200 residues: Putative HTH-type transcriptional regulator YhjB (200 aa).

One can recognise an HTH luxR-type domain in the interval 135 to 200; the sequence is DIKDLKSLSA…QAAMMLNISS (66 aa). The H-T-H motif DNA-binding region spans 159 to 178; that stretch reads NKEIGRALNISTGTVKAHLE.

This is Putative HTH-type transcriptional regulator YhjB (yhjB) from Escherichia coli (strain K12).